Here is a 763-residue protein sequence, read N- to C-terminus: Phosphoglycerol transferase I (763 aa).

4 consecutive transmembrane segments (helical) span residues 1–21, 24–44, 77–97, and 108–128; these read MSELLSVALFLASVLVYAWKA, NTWWFAATLTVLGLFVILNIT, ILPGIGIVLALVGVFGALGWI, and VGYSLLALLLALGSVDASPAF.

Belongs to the OpgB family.

It localises to the cell inner membrane. The enzyme catalyses a phosphatidylglycerol + a membrane-derived-oligosaccharide D-glucose = a 1,2-diacyl-sn-glycerol + a membrane-derived-oligosaccharide 6-(glycerophospho)-D-glucose.. Its pathway is glycan metabolism; osmoregulated periplasmic glucan (OPG) biosynthesis. Transfers a phosphoglycerol residue from phosphatidylglycerol to the membrane-bound nascent glucan backbones. This chain is Phosphoglycerol transferase I, found in Salmonella arizonae (strain ATCC BAA-731 / CDC346-86 / RSK2980).